A 69-amino-acid chain; its full sequence is Disintegrin EMF10A (69 aa).

The Disintegrin domain maps to 1–66; it reads MNSANPCCDP…DCPRNPWKSE (66 aa). 4 disulfides stabilise this stretch: Cys7-Cys30, Cys21-Cys27, Cys26-Cys51, and Cys39-Cys58. The Cell attachment site motif lies at 43 to 45; the sequence is RGD.

The protein belongs to the disintegrin family. Dimeric disintegrin subfamily. In terms of assembly, heterodimer with EMF10B; disulfide-linked. As to expression, expressed by the venom gland.

It is found in the secreted. Its function is as follows. Extremely potent and selective inhibitor of integrin alpha-5/beta-1 (ITGA5/ITGB1). Partially inhibits adhesion of cells expressing alpha-IIb/beta-3 (ITGA2B/ITGB3), alpha-V/beta-3 (ITGAV/ITGB3), and alpha-4/beta-1 (ITGA4/ITGB1) to appropriate ligands only at concentration higher than 500 nM. Weakly inhibits ADP-induced platelet aggregation. The sequence is that of Disintegrin EMF10A from Eristicophis macmahoni (Leaf-nosed viper).